The chain runs to 648 residues: Biosynthetic arginine decarboxylase (648 aa).

Position 109 is an N6-(pyridoxal phosphate)lysine (K109). I291–F301 serves as a coordination point for substrate.

Belongs to the Orn/Lys/Arg decarboxylase class-II family. SpeA subfamily. The cofactor is Mg(2+). Pyridoxal 5'-phosphate is required as a cofactor.

It carries out the reaction L-arginine + H(+) = agmatine + CO2. It functions in the pathway amine and polyamine biosynthesis; agmatine biosynthesis; agmatine from L-arginine: step 1/1. Functionally, catalyzes the biosynthesis of agmatine from arginine. The polypeptide is Biosynthetic arginine decarboxylase (Prochlorococcus marinus (strain MIT 9301)).